We begin with the raw amino-acid sequence, 333 residues long: Cell division protein ZipA (333 aa).

Residues 1 to 5 (MQELR) lie on the Periplasmic side of the membrane. Residues 6–26 (LVLILVGALAIAALLFHGLWT) form a helical membrane-spanning segment. Residues 27 to 333 (SRKETSSKFG…KQRVKVFCRK (307 aa)) are Cytoplasmic-facing. The span at 72-81 (KEPAFAREEV) shows a compositional bias: basic and acidic residues. The interval 72–119 (KEPAFAREEVPTSDDPLFEGTVSSESNKFTQQEKPTVQQAQPQPQPQP) is disordered. The span at 92–107 (TVSSESNKFTQQEKPT) shows a compositional bias: polar residues. The span at 108-119 (VQQAQPQPQPQP) shows a compositional bias: low complexity.

This sequence belongs to the ZipA family. As to quaternary structure, interacts with FtsZ via their C-terminal domains.

The protein localises to the cell inner membrane. Essential cell division protein that stabilizes the FtsZ protofilaments by cross-linking them and that serves as a cytoplasmic membrane anchor for the Z ring. Also required for the recruitment to the septal ring of downstream cell division proteins. This is Cell division protein ZipA from Aliivibrio fischeri (strain ATCC 700601 / ES114) (Vibrio fischeri).